We begin with the raw amino-acid sequence, 289 residues long: Acetyl-coenzyme A carboxylase carboxyl transferase subunit beta (289 aa).

Residues 24 to 289 (LWIKCPESGE…NSPRRAPIPA (266 aa)) form the CoA carboxyltransferase N-terminal domain.

This sequence belongs to the AccD/PCCB family. As to quaternary structure, acetyl-CoA carboxylase is a heterohexamer composed of biotin carboxyl carrier protein (AccB), biotin carboxylase (AccC) and two subunits each of ACCase subunit alpha (AccA) and ACCase subunit beta (AccD).

It is found in the cytoplasm. The catalysed reaction is N(6)-carboxybiotinyl-L-lysyl-[protein] + acetyl-CoA = N(6)-biotinyl-L-lysyl-[protein] + malonyl-CoA. It functions in the pathway lipid metabolism; malonyl-CoA biosynthesis; malonyl-CoA from acetyl-CoA: step 1/1. Functionally, component of the acetyl coenzyme A carboxylase (ACC) complex. Biotin carboxylase (BC) catalyzes the carboxylation of biotin on its carrier protein (BCCP) and then the CO(2) group is transferred by the transcarboxylase to acetyl-CoA to form malonyl-CoA. The polypeptide is Acetyl-coenzyme A carboxylase carboxyl transferase subunit beta (Beijerinckia indica subsp. indica (strain ATCC 9039 / DSM 1715 / NCIMB 8712)).